The following is a 138-amino-acid chain: Ribosome-binding factor A (138 aa).

Residues Val-116–Glu-138 are disordered.

The protein belongs to the RbfA family. As to quaternary structure, monomer. Binds 30S ribosomal subunits, but not 50S ribosomal subunits or 70S ribosomes.

The protein localises to the cytoplasm. In terms of biological role, one of several proteins that assist in the late maturation steps of the functional core of the 30S ribosomal subunit. Associates with free 30S ribosomal subunits (but not with 30S subunits that are part of 70S ribosomes or polysomes). Required for efficient processing of 16S rRNA. May interact with the 5'-terminal helix region of 16S rRNA. The chain is Ribosome-binding factor A from Pseudomonas syringae pv. tomato (strain ATCC BAA-871 / DC3000).